Here is a 506-residue protein sequence, read N- to C-terminus: Glutamate--tRNA ligase (506 aa).

The short motif at 29–39 (PSPTGTPHVGL) is the 'HIGH' region element. Residues 273-277 (KLSKR) carry the 'KMSKS' region motif. ATP is bound at residue Lys-276.

Belongs to the class-I aminoacyl-tRNA synthetase family. Glutamate--tRNA ligase type 1 subfamily. Monomer.

It is found in the cytoplasm. The enzyme catalyses tRNA(Glu) + L-glutamate + ATP = L-glutamyl-tRNA(Glu) + AMP + diphosphate. Its function is as follows. Catalyzes the attachment of glutamate to tRNA(Glu) in a two-step reaction: glutamate is first activated by ATP to form Glu-AMP and then transferred to the acceptor end of tRNA(Glu). This is Glutamate--tRNA ligase from Paenarthrobacter aurescens (strain TC1).